We begin with the raw amino-acid sequence, 729 residues long: Solute carrier family 15 member 2 (729 aa).

Residues 1-34 are disordered; that stretch reads MNPFQQNESKETLFSPVSTEETPPRLSSPAKKTP. Over 1–57 the chain is Cytoplasmic; sequence MNPFQQNESKETLFSPVSTEETPPRLSSPAKKTPPKICGSNYPLSIAFIVVNEFCER. The residue at position 9 (serine 9) is a Phosphoserine. Threonine 12 bears the Phosphothreonine mark. Serine 28 carries the phosphoserine modification. Residues 58–78 traverse the membrane as a helical segment; it reads FSYYGMKAVLTLYFLYFLHWN. The Extracellular portion of the chain corresponds to 79–87; that stretch reads EDTSTSVYH. A helical transmembrane segment spans residues 88-108; the sequence is AFSSLCYFTPILGAAIADSWL. Over 109–113 the chain is Cytoplasmic; the sequence is GKFKT. Residues 114–134 traverse the membrane as a helical segment; the sequence is IIYLSLVNVLGHVIKSLSAFP. Topologically, residues 135–139 are extracellular; it reads ILGGK. Residues 140–160 traverse the membrane as a helical segment; the sequence is VVHTVLSLVGLCLIALGTGGI. Residues 161–183 are Cytoplasmic-facing; that stretch reads KPCVAAFGGDQFEEKHAEERTRY. Residues 184 to 204 form a helical membrane-spanning segment; that stretch reads FSGFYLAINAGSLISTFITPM. The Extracellular segment spans residues 205–217; that stretch reads LRGDVQCFGEDCY. The chain crosses the membrane as a helical span at residues 218 to 238; it reads ALAFGVPGLLMVIALVVFAMG. Residues 239-295 are Cytoplasmic-facing; that stretch reads SKMYKKPPPEGNIVAQVVKCIWFAISNRFKNRSEDIPKRQHWLDWAAEKYPKQLIMD. A helical transmembrane segment spans residues 296-316; that stretch reads VKTLTRVLFLYIPLPMFWALL. Over 317-343 the chain is Extracellular; it reads DQQGSRWTLQATKMNGNLGFFVLQPDQ. The helical transmembrane segment at 344-364 threads the bilayer; sequence MQVLNPLLVLIFIPLFDLVIY. At 365-380 the chain is on the cytoplasmic side; it reads RLISKCGINFTSLRKM. Residues 381 to 401 traverse the membrane as a helical segment; that stretch reads AVGMVLACLAFAAAATVEIKI. Over 402-611 the chain is Extracellular; the sequence is NEMAPPQPGS…PANKVSIAWQ (210 aa). An extracellular domain (ECD) region spans residues 402–611; sequence NEMAPPQPGS…PANKVSIAWQ (210 aa). 5 N-linked (GlcNAc...) asparagine glycosylation sites follow: asparagine 435, asparagine 472, asparagine 508, asparagine 528, and asparagine 587. Residues 612-632 traverse the membrane as a helical segment; the sequence is LPQYALVTAGEVMFSVTGLEF. Over 633 to 643 the chain is Cytoplasmic; that stretch reads SYSQAPSSMKS. A helical transmembrane segment spans residues 644-664; that stretch reads VLQAAWLLTVAIGNIIVLVVA. Topologically, residues 665-674 are extracellular; sequence QFSGLVQWAE. A helical transmembrane segment spans residues 675-695; the sequence is FVLFSCLLLVVCLIFSIMGYY. Residues 696–729 are Cytoplasmic-facing; the sequence is YIPIKSEDIQGPEDKQIPHMQGNMINLETKKTKL.

Belongs to the major facilitator superfamily. Proton-dependent oligopeptide transporter (POT/PTR) (TC 2.A.17) family. As to quaternary structure, interacts (via extracellular domain region) with trypsin. As to expression, strongly expressed in kidney. Also detected in brain, lung, liver and heart.

It localises to the apical cell membrane. Its subcellular location is the cytoplasmic vesicle. The protein localises to the phagosome membrane. The protein resides in the cell membrane. The catalysed reaction is a dipeptide(out) + 2 H(+)(out) = a dipeptide(in) + 2 H(+)(in). It carries out the reaction N-acetyl-D-muramoyl-L-alanyl-D-isoglutamine(out) + 3 H(+)(out) = N-acetyl-D-muramoyl-L-alanyl-D-isoglutamine(in) + 3 H(+)(in). The enzyme catalyses glycyl-L-leucine(out) + 2 H(+)(out) = glycyl-L-leucine(in) + 2 H(+)(in). It catalyses the reaction glycyl-L-lysine(out) + 2 H(+)(out) = glycyl-L-lysine(in) + 2 H(+)(in). The catalysed reaction is glycyl-L-glutamate(out) + 3 H(+)(out) = glycyl-L-glutamate(in) + 3 H(+)(in). It carries out the reaction L-alanyl-L-alanine(out) + 2 H(+)(out) = L-alanyl-L-alanine(in) + 2 H(+)(in). The enzyme catalyses an L-amino acid tripeptide(out) + 2 H(+)(out) = an L-amino acid tripeptide(in) + 2 H(+)(in). It catalyses the reaction carnosine(out) + 2 H(+)(out) = carnosine(in) + 2 H(+)(in). Proton-coupled amino-acid transporter that transports oligopeptides of 2 to 4 amino acids with a preference for dipeptides. Transports neutral and anionic dipeptides with a proton to peptide stoichiometry of 2:1 or 3:1. In kidney, involved in the absorption of circulating di- and tripeptides from the glomerular filtrate. Can also transport beta-lactam antibiotics, such as the aminocephalosporin cefadroxil, and other antiviral and anticancer drugs. Transports the dipeptide-like aminopeptidase inhibitor bestatin. Also able to transport carnosine. Involved in innate immunity by promoting the detection of microbial pathogens by NOD-like receptors (NLRs). Mediates transport of bacterial peptidoglycans across the plasma membrane or, in macrophages, the phagosome membrane: catalyzes the transport of certain bacterial peptidoglycans, such as muramyl dipeptide (MDP), the NOD2 ligand. In Oryctolagus cuniculus (Rabbit), this protein is Solute carrier family 15 member 2.